A 1336-amino-acid chain; its full sequence is Mating factor M secretion protein mam1 (1336 aa).

Positions 1–29 (MHIHSDLSLPQFEHASIDPPSYSPQKSSF) are disordered. At 1–91 (MHIHSDLSLP…ELAGVSSWSD (91 aa)) the chain is on the cytoplasmic side. Residues 92 to 112 (FFYLFHFSDIPLIFGTLIFTC) form a helical membrane-spanning segment. The ABC transmembrane type-1 1 domain maps to 104–396 (IFGTLIFTCL…ILPAIPDLIK (293 aa)). Residues 113–153 (LSAALEPLMTWTTGKVFDALSQYATSQITLGKMISLINFNS) lie on the Extracellular side of the membrane. Residues 154–174 (LLITIFGLASCVFSFGVRFLW) form a helical membrane-spanning segment. Residues 175–250 (QYLSAIAGKR…SCLIISFRYS (76 aa)) lie on the Cytoplasmic side of the membrane. Residues 251–271 (WSLTLVVLASYPIIILVVGFI) form a helical membrane-spanning segment. The Extracellular segment spans residues 272 to 778 (NSFLSSAYEK…KSIWKVKKLR (507 aa)). The 236-residue stretch at 433–668 (FRFDNVSFAY…EDFENNVSID (236 aa)) folds into the ABC transporter 1 domain. Asparagine 437 and asparagine 454 each carry an N-linked (GlcNAc...) asparagine glycan. 469–476 (GPSGSGKS) contacts ATP. Residues asparagine 536, asparagine 664, and asparagine 697 are each glycosylated (N-linked (GlcNAc...) asparagine). A helical transmembrane segment spans residues 779-799 (WFFLLGLLTSLIQGASVPIFA). In terms of domain architecture, ABC transmembrane type-1 2 spans 781-1066 (FLLGLLTSLI…CIMSLPNVSA (286 aa)). The Cytoplasmic segment spans residues 800–897 (YVISKCLNLF…ISDMRNMISS (98 aa)). The helical transmembrane segment at 898-918 (LIEEVFIAFTMAIIGIAWSFA) threads the bilayer. Topologically, residues 919–1336 (TGWRLAAVLV…KLIHRGEWIE (418 aa)) are extracellular. Residues asparagine 1011, asparagine 1063, and asparagine 1120 are each glycosylated (N-linked (GlcNAc...) asparagine). Residues 1099–1331 (IEFDGVSFAY…HTHFWKLIHR (233 aa)) enclose the ABC transporter 2 domain. Residue 1135-1142 (GISGSGKS) participates in ATP binding. Residues asparagine 1235 and asparagine 1280 are each glycosylated (N-linked (GlcNAc...) asparagine).

Belongs to the ABC transporter superfamily. Alpha-factor sex pheromone exporter (TC 3.A.1.206) family.

Its subcellular location is the membrane. Its function is as follows. Required in S.pombe M (minus) cells for production of M-factor pheromone. Involved in the transport of the farnesyl-derivation of the M-factor pheromone. This is Mating factor M secretion protein mam1 (mam1) from Schizosaccharomyces pombe (strain 972 / ATCC 24843) (Fission yeast).